The chain runs to 440 residues: Protein arginine N-methyltransferase 2 (440 aa).

The tract at residues L147–K194 is disordered. Over residues E152–A168 the composition is skewed to acidic residues. The span at E182 to K194 shows a compositional bias: basic and acidic residues. Residues K192–L440 form the RMT2 domain. Residues Y201, M230, F252–V257, E273–H275, W310–Q311, and D330 each bind S-adenosyl-L-methionine.

It belongs to the class I-like SAM-binding methyltransferase superfamily. RMT2 methyltransferase family. Monomer.

It is found in the cytoplasm. The protein localises to the nucleus. S-adenosyl-L-methionine-dependent protein-arginine N-methyltransferase that methylates the delta-nitrogen atom of arginine residues to form N5-methylarginine (type IV) in target proteins. Monomethylates ribosomal protein L12. The sequence is that of Protein arginine N-methyltransferase 2 from Gibberella zeae (strain ATCC MYA-4620 / CBS 123657 / FGSC 9075 / NRRL 31084 / PH-1) (Wheat head blight fungus).